The following is a 234-amino-acid chain: Putative gustatory receptor clone PTE38 (234 aa).

A helical membrane pass occupies residues 1–11; the sequence is MYLFFSNLSFN. Residues 12–42 lie on the Extracellular side of the membrane; it reads DICIITTTIPKMLMNVQSHDQSITYLGCLSQ. Residues C39 and C121 are joined by a disulfide bond. A helical transmembrane segment spans residues 43 to 62; it reads VYLIVNFGSIESCLLAVMAY. Topologically, residues 63–84 are cytoplasmic; sequence DRYVAICHPLKYTVIMNHYFCV. A helical transmembrane segment spans residues 85–105; the sequence is MLLLFACSLALHMCLFHILMV. At 106-138 the chain is on the extracellular side; it reads LILTFCTKTEIPHFFCELAHIIKLTCSDNFINY. Residues 139–160 form a helical membrane-spanning segment; sequence LLIYTVSVLFFGVHIVGIILSY. The Cytoplasmic segment spans residues 161–182; the sequence is IYTVSSVLRMSLLGGMYKAFST. A helical transmembrane segment spans residues 183–202; that stretch reads CGSHLSVVSLFYGTGFGVHI. The Extracellular segment spans residues 203–212; it reads SSPLTDSPRK. A helical transmembrane segment spans residues 213–234; the sequence is TVVASVMYTVVTQMHGPFIYSL.

It belongs to the G-protein coupled receptor 1 family. As to expression, tongue specific.

The protein localises to the cell membrane. In terms of biological role, possible taste receptor. This is Putative gustatory receptor clone PTE38 from Rattus norvegicus (Rat).